A 302-amino-acid chain; its full sequence is F-box protein At1g20360 (302 aa).

The F-box domain occupies methionine 1 to leucine 48.

The protein is F-box protein At1g20360 of Arabidopsis thaliana (Mouse-ear cress).